Reading from the N-terminus, the 183-residue chain is Akirin-1B (183 aa).

Residues Glu-14–Gly-43 form a disordered region. An SYVS motif motif is present at residues Ser-180 to Ser-183.

It belongs to the akirin family.

It localises to the nucleus. In terms of biological role, molecular adapter that acts as a bridge between proteins, and which is involved skeletal muscle development. Functions as a signal transducer for MSTN during skeletal muscle regeneration and myogenesis. This chain is Akirin-1B (akirin1-b), found in Xenopus laevis (African clawed frog).